Reading from the N-terminus, the 207-residue chain is MKKNMYYAISAPSGTGKSSLIKTFLNTNLGMNFRLSISHTTRNIRSEEIEGKDYFFISKEKFKKMIFEKKFIEYTYSFNNYYGTSFKEVKNKIKSNFSLFFDVNYKGVKKIKEFIPKLISIFILPPSKLDLLKRLYNRYNSNEFELNKRFYKYKKDILNYNKYDFILINRDFNNTLNKIKTIIISKNKKAINQIDKINETIKKLLKK.

A Guanylate kinase-like domain is found at Asn-4–Ile-184. ATP is bound at residue Ala-11 to Ser-18.

This sequence belongs to the guanylate kinase family.

Its subcellular location is the cytoplasm. The enzyme catalyses GMP + ATP = GDP + ADP. Functionally, essential for recycling GMP and indirectly, cGMP. This chain is Guanylate kinase, found in Wigglesworthia glossinidia brevipalpis.